We begin with the raw amino-acid sequence, 328 residues long: MSLIKIDQKAYEYNLRHIAKKIGSFQRLICVFKDNAYGHGAKLLAPLAKNLGVSFVAVKSEEEAQEIEEFFENILILSHRPHGNENSRFIYALNDISQVKKYKQDIKIHLKIDTGMHRNGICVENLEHAIDLIRSSDLKLTGMFTHFASADEMDGSFFVQKENFQKAKKIVKKYFSNLLFHSHNSAALFRGKIPEDEYCRVGLVQFGYGDSNLKKVLSLYAHRLSQRILQKGQSIGYGGIFTAAKDMEVATYDLGYADGLFRYNGKGELVLGNGKVMLGKMSMDSFSCENSGEEICVFKDADIWADFFHTINYEILVKLNPNIQRVLV.

The active-site Proton acceptor; specific for D-alanine is the K33. K33 is subject to N6-(pyridoxal phosphate)lysine. A substrate-binding site is contributed by R118. Y237 serves as the catalytic Proton acceptor; specific for L-alanine. Position 283 (M283) interacts with substrate.

Belongs to the alanine racemase family. Requires pyridoxal 5'-phosphate as cofactor.

It carries out the reaction L-alanine = D-alanine. It functions in the pathway amino-acid biosynthesis; D-alanine biosynthesis; D-alanine from L-alanine: step 1/1. Its function is as follows. Catalyzes the interconversion of L-alanine and D-alanine. May also act on other amino acids. This chain is Alanine racemase (alr), found in Campylobacter jejuni subsp. jejuni serotype O:23/36 (strain 81-176).